Consider the following 314-residue polypeptide: MLTFFIGDLLPIIVIMLLGYFSGRRETFSEDQARAFNKLVLNYALPAALFVSITRANREMIFADTRLTLVSLVVIVGCFFFSWFGCYKFFKRTHAEAAVCALIAGSPTIGFLGFAVLDPIYGDSVSTGLVVAIISIIVNAITIPIGLYLLNPSSGADGKKNSNLSALISAAKEPVVWAPVLATILVLVGVKIPAAWDPTFNLIAKANSGVAVFAAGLTLAAHKFEFSAEIAYNTFLKLILMPLALLLVGMACHLNSEHLQMMVLAGALPPAFSGIIIASRFNVYTRTGTASLAVSVLGFVVTAPLWIYVSRLVS.

The next 10 helical transmembrane spans lie at 4-23 (FFIGDLLPIIVIMLLGYFSG), 36-53 (FNKLVLNYALPAALFVSI), 68-90 (TLVSLVVIVGCFFFSWFGCYKFF), 97-116 (AAVCALIAGSPTIGFLGFAV), 131-153 (VAIISIIVNAITIPIGLYLLNPS), 174-196 (PVVWAPVLATILVLVGVKIPAAW), 200-222 (FNLIAKANSGVAVFAAGLTLAAH), 229-251 (EIAYNTFLKLILMPLALLLVGMA), 261-283 (MMVLAGALPPAFSGIIIASRFNV), and 290-309 (ASLAVSVLGFVVTAPLWIYV).

Belongs to the auxin efflux carrier (TC 2.A.69) family.

The protein resides in the cell membrane. This is an uncharacterized protein from Escherichia coli O157:H7.